We begin with the raw amino-acid sequence, 889 residues long: Valine--tRNA ligase (889 aa).

The 'HIGH' region signature appears at 50–60 (PNVTGKLHLGH). The short motif at 532 to 536 (KMSKS) is the 'KMSKS' region element. ATP is bound at residue lysine 535. Residues 816-889 (LAELVDLDEE…QRLVDIKAEA (74 aa)) are a coiled coil.

Belongs to the class-I aminoacyl-tRNA synthetase family. ValS type 1 subfamily. In terms of assembly, monomer.

It is found in the cytoplasm. The catalysed reaction is tRNA(Val) + L-valine + ATP = L-valyl-tRNA(Val) + AMP + diphosphate. Functionally, catalyzes the attachment of valine to tRNA(Val). As ValRS can inadvertently accommodate and process structurally similar amino acids such as threonine, to avoid such errors, it has a 'posttransfer' editing activity that hydrolyzes mischarged Thr-tRNA(Val) in a tRNA-dependent manner. The sequence is that of Valine--tRNA ligase from Lactiplantibacillus plantarum (strain ATCC BAA-793 / NCIMB 8826 / WCFS1) (Lactobacillus plantarum).